The primary structure comprises 657 residues: Histidine ammonia-lyase (657 aa).

A cross-link (5-imidazolinone (Ala-Gly)) is located at residues 253–255; it reads ASG. Serine 254 carries the 2,3-didehydroalanine (Ser) modification. Phosphothreonine is present on threonine 396. Serine 635 is subject to Phosphoserine. Position 637 is a phosphothreonine (threonine 637). The residue at position 648 (serine 648) is a Phosphoserine.

The protein belongs to the PAL/histidase family. In terms of processing, contains an active site 4-methylidene-imidazol-5-one (MIO), which is formed autocatalytically by cyclization and dehydration of residues Ala-Ser-Gly.

The catalysed reaction is L-histidine = trans-urocanate + NH4(+). It participates in amino-acid degradation; L-histidine degradation into L-glutamate; N-formimidoyl-L-glutamate from L-histidine: step 1/3. The chain is Histidine ammonia-lyase (HAL) from Bos taurus (Bovine).